Reading from the N-terminus, the 413-residue chain is BSD domain-containing protein 1-A (413 aa).

Residues 146–198 (WLAYWDPEQRKAEISELLVTSPSIRALFTKMVPAAVSHSEFWQRYFYKVHQLE) enclose the BSD domain. Basic and acidic residues-rich tracts occupy residues 208–219 (KQRADQSVHSEE) and 255–271 (HVEDKSEKTAELNRDHT). 2 disordered regions span residues 208–228 (KQRADQSVHSEEPTWEEEEED) and 255–386 (HVED…EFDM). The segment covering 274-287 (TSPSESSESISPIT) has biased composition (low complexity). A compositionally biased stretch (polar residues) spans 297 to 322 (QTPSKEPSPGTLTVTKENTGAGTDET). Positions 342–352 (QREDPPSDLRV) are enriched in basic and acidic residues. The segment covering 356–375 (NSDSGKSTPSNNGQKGSSTD) has biased composition (polar residues). Acidic residues predominate over residues 376–386 (ISEDWEKEFDM).

This is BSD domain-containing protein 1-A (bsdc1-a) from Xenopus laevis (African clawed frog).